Here is a 504-residue protein sequence, read N- to C-terminus: Protein FMP42 (504 aa).

Topologically, residues 1–11 are vacuolar; that stretch reads MTSTRTLRYAQ. A helical transmembrane segment spans residues 12–32; sequence VACACIWCLFSAGIIFGFAAL. Residues 33–64 are Cytoplasmic-facing; the sequence is KPILISEGVYHELCDPKDGDRLLCTAQDLKLN. Residues 65 to 85 form a helical membrane-spanning segment; the sequence is FIFALSATVTNIMALPVGKIL. Residues 86–91 lie on the Vacuolar side of the membrane; that stretch reads DMYGPR. The chain crosses the membrane as a helical span at residues 92 to 112; the sequence is VCGIIGSCLLFLASGNFISAK. Topologically, residues 113–119 are cytoplasmic; sequence HLVSLWD. A helical membrane pass occupies residues 120–140; sequence PYLVGYTLLAVAGPFVFISCF. Topologically, residues 141–150 are vacuolar; that stretch reads QLANSFPQRS. Residues 151–171 traverse the membrane as a helical segment; sequence GTVLALLTGSFDSSSALFLLY. At 172-186 the chain is on the cytoplasmic side; the sequence is RLLYQNWFPTLNVSR. The chain crosses the membrane as a helical span at residues 187-207; it reads FFTLYLIVPVFILACQLTIMP. Residues 208-302 lie on the Vacuolar side of the membrane; sequence HSSYKTVNHI…KSAYEQIKSP (95 aa). Phosphoserine occurs at positions 238, 249, and 269. The chain crosses the membrane as a helical span at residues 303 to 323; the sequence is WFYLMLLFALVAMLRINYFIA. The Cytoplasmic portion of the chain corresponds to 324-344; that stretch reads TVRTQEEYLLNDPDLALKLNS. A helical membrane pass occupies residues 345–365; it reads IFDMLLPLGGAVSIPFIGLLL. Over 366–385 the chain is Vacuolar; it reads DHTDTLSTLTILFTTSTAIG. A helical transmembrane segment spans residues 386 to 406; sequence VFGLIPNSFTWNLIGIVLLVV. Topologically, residues 407–421 are cytoplasmic; the sequence is YRPFYYTVVSDYSSK. Residues 422-442 form a helical membrane-spanning segment; the sequence is VFGFDTFGTVYGLLSCICGIF. At 443–462 the chain is on the vacuolar side; that stretch reads NMSQNLLDKWTHTTFNMNPF. The chain crosses the membrane as a helical span at residues 463–483; it reads PINLTLVILTVVFSLTLTFYI. Residues 484 to 504 are Cytoplasmic-facing; that stretch reads RSQILPKPVNERGLSSNYQTI.

It belongs to the SLC43A transporter (TC 2.A.1.44) family.

It is found in the vacuole membrane. The chain is Protein FMP42 (FMP42) from Saccharomyces cerevisiae (strain ATCC 204508 / S288c) (Baker's yeast).